The sequence spans 387 residues: Chorismate synthase (387 aa).

Positions 40 and 46 each coordinate NADP(+). FMN contacts are provided by residues 129–131, 250–251, Gly-295, 310–314, and Arg-336; these read RSS, QA, and KPIPT.

This sequence belongs to the chorismate synthase family. As to quaternary structure, homotetramer. Requires FMNH2 as cofactor.

The enzyme catalyses 5-O-(1-carboxyvinyl)-3-phosphoshikimate = chorismate + phosphate. Its pathway is metabolic intermediate biosynthesis; chorismate biosynthesis; chorismate from D-erythrose 4-phosphate and phosphoenolpyruvate: step 7/7. Catalyzes the anti-1,4-elimination of the C-3 phosphate and the C-6 proR hydrogen from 5-enolpyruvylshikimate-3-phosphate (EPSP) to yield chorismate, which is the branch point compound that serves as the starting substrate for the three terminal pathways of aromatic amino acid biosynthesis. This reaction introduces a second double bond into the aromatic ring system. This Desulforamulus reducens (strain ATCC BAA-1160 / DSM 100696 / MI-1) (Desulfotomaculum reducens) protein is Chorismate synthase.